A 545-amino-acid polypeptide reads, in one-letter code: Oligopeptide-binding protein OppA (545 aa).

The signal sequence occupies residues 1–20; that stretch reads MKKRWSIVTLMLIFTLVLSA. A lipid anchor (N-palmitoyl cysteine) is attached at Cys21. Cys21 carries S-diacylglycerol cysteine lipidation. The residue at position 470 (Thr470) is a Phosphothreonine.

Belongs to the bacterial solute-binding protein 5 family. As to quaternary structure, the complex is composed of two ATP-binding proteins (OppD and OppF), two transmembrane proteins (OppB and OppC) and a solute-binding protein (OppA). OppA interacts with FloT in detergent-resistant membranes (DRM). Colocalizes rarely with FloT membrane assemblies.

The protein localises to the cell membrane. It is found in the membrane raft. Functionally, part of the ABC transporter complex OppABCDF involved in the uptake of oligopeptides. Plays an important nutritional role. Binds peptides containing up to five amino acids residues regardless of their sequence, with highest affinity for tetra- and pentapeptides. Binds to the sporulation-promoting peptide PhrE (Ser-Arg-Asn-Val-Thr). Required for sporulation and genetic competence. This is Oligopeptide-binding protein OppA from Bacillus subtilis (strain 168).